A 99-amino-acid polypeptide reads, in one-letter code: DNA-binding protein HU (99 aa).

The tract at residues 63–82 (HRKEREGRNPKTGAKMKIDA) is disordered.

The protein belongs to the bacterial histone-like protein family. Homodimer.

In terms of biological role, histone-like DNA-binding protein which is capable of wrapping DNA to stabilize it, and thus to prevent its denaturation under extreme environmental conditions. In Rickettsia prowazekii (strain Madrid E), this protein is DNA-binding protein HU (hup).